The sequence spans 266 residues: Aspartate/glutamate leucyltransferase (266 aa).

The protein belongs to the R-transferase family. Bpt subfamily.

It is found in the cytoplasm. It carries out the reaction N-terminal L-glutamyl-[protein] + L-leucyl-tRNA(Leu) = N-terminal L-leucyl-L-glutamyl-[protein] + tRNA(Leu) + H(+). It catalyses the reaction N-terminal L-aspartyl-[protein] + L-leucyl-tRNA(Leu) = N-terminal L-leucyl-L-aspartyl-[protein] + tRNA(Leu) + H(+). Its function is as follows. Functions in the N-end rule pathway of protein degradation where it conjugates Leu from its aminoacyl-tRNA to the N-termini of proteins containing an N-terminal aspartate or glutamate. The chain is Aspartate/glutamate leucyltransferase from Rhizorhabdus wittichii (strain DSM 6014 / CCUG 31198 / JCM 15750 / NBRC 105917 / EY 4224 / RW1) (Sphingomonas wittichii).